The following is a 347-amino-acid chain: Putative ORC1-type DNA replication protein 1 (347 aa).

ATP is bound by residues 34–38 (TGKTV), tyrosine 167, and arginine 179.

This sequence belongs to the CDC6/cdc18 family.

In terms of biological role, involved in regulation of DNA replication. Has no effect on MCM helicase activity, either stimulatory or inhibitory. Does not bind DNA. The polypeptide is Putative ORC1-type DNA replication protein 1 (cdc6-1) (Thermoplasma acidophilum (strain ATCC 25905 / DSM 1728 / JCM 9062 / NBRC 15155 / AMRC-C165)).